The following is a 262-amino-acid chain: Acyl-[acyl-carrier-protein]--UDP-N-acetylglucosamine O-acyltransferase (262 aa).

The protein belongs to the transferase hexapeptide repeat family. LpxA subfamily. In terms of assembly, homotrimer.

It is found in the cytoplasm. The enzyme catalyses a (3R)-hydroxyacyl-[ACP] + UDP-N-acetyl-alpha-D-glucosamine = a UDP-3-O-[(3R)-3-hydroxyacyl]-N-acetyl-alpha-D-glucosamine + holo-[ACP]. It participates in glycolipid biosynthesis; lipid IV(A) biosynthesis; lipid IV(A) from (3R)-3-hydroxytetradecanoyl-[acyl-carrier-protein] and UDP-N-acetyl-alpha-D-glucosamine: step 1/6. Its function is as follows. Involved in the biosynthesis of lipid A, a phosphorylated glycolipid that anchors the lipopolysaccharide to the outer membrane of the cell. This is Acyl-[acyl-carrier-protein]--UDP-N-acetylglucosamine O-acyltransferase from Psychromonas ingrahamii (strain DSM 17664 / CCUG 51855 / 37).